The sequence spans 457 residues: TnpB-like protein ORF457 (457 aa).

The segment at 1 to 22 is disordered; the sequence is MPPSSGQLLGDEEREPTSTPAI.

In the N-terminal section; belongs to the transposase 2 family. It in the C-terminal section; belongs to the transposase 35 family.

The protein is TnpB-like protein ORF457 of Acidianus two-tailed virus (ATV).